The primary structure comprises 2319 residues: A-kinase anchor protein 6 (2319 aa).

Polar residues-rich tracts occupy residues 1-12 (MLTMSVTLSPLR) and 324-339 (GVSS…AAQP). Disordered regions lie at residues 1-24 (MLTM…TDAS), 301-369 (VDDK…NATP), 493-532 (SRLK…VPNG), 566-614 (LQLQ…PSHV), and 691-757 (TRLG…SATK). Residues 340–351 (SSETVQQESSSS) show a composition bias toward low complexity. Composition is skewed to polar residues over residues 518–532 (GKQA…VPNG) and 566–591 (LQLQ…SDNI). Low complexity predominate over residues 697-711 (SPSSSSDIASSLGES). The span at 735 to 754 (KYADEKSERASSSEKNESHS) shows a compositional bias: basic and acidic residues. Spectrin repeat units follow at residues 762-848 (QKLM…QLLE) and 1036-1150 (EKVD…LLDD). Ser1073 carries the post-translational modification Phosphoserine. Residues 1250-1272 (KLGETSNEDPGYDEEADNHGGSQ) are disordered. A compositionally biased stretch (acidic residues) spans 1255–1265 (SNEDPGYDEEA). Residues Ser1570 and Ser1595 each carry the phosphoserine modification. Disordered stretches follow at residues 1821–1842 (VSDE…PSDT), 1900–1925 (EGIP…SHGK), and 1963–1983 (KCPN…TEKS). Composition is skewed to polar residues over residues 1830-1842 (DISS…PSDT), 1911-1920 (NVTSKVSENL), and 1972-1982 (NQSTASTPTEK). The PKA-RII subunit binding domain stretch occupies residues 2063-2076 (IIDMASTALKSKSQ). The span at 2198–2215 (FSDSSLSADDADTVALSS) shows a compositional bias: low complexity. The interval 2198–2319 (FSDSSLSADD…HEKRHRNMHR (122 aa)) is disordered.

In terms of assembly, interacts with RII subunit of PKA, phosphatase 2B (calcineurin) and AKAP79. Interacts with SYNPO2. In terms of tissue distribution, highly expressed in cardiac and skeletal muscle, followed by brain.

The protein resides in the sarcoplasmic reticulum. It is found in the nucleus membrane. In terms of biological role, binds to type II regulatory subunits of protein kinase A and anchors/targets them to the nuclear membrane or sarcoplasmic reticulum. May act as an adapter for assembling multiprotein complexes. The protein is A-kinase anchor protein 6 (AKAP6) of Homo sapiens (Human).